Reading from the N-terminus, the 79-residue chain is MSFNNPDHQLDAIGLRCPEPVMMVRAAIRKMNDGETLLIIADDPSTTRDIPSFCTFMDHTLVAKDAEQAPYRYVVKKGL.

Catalysis depends on Cys-17, which acts as the Cysteine persulfide intermediate.

The protein belongs to the sulfur carrier protein TusA family.

It localises to the cytoplasm. Functionally, sulfur carrier protein which probably makes part of a sulfur-relay system. This Pseudoalteromonas translucida (strain TAC 125) protein is Sulfur carrier protein TusA.